The following is a 303-amino-acid chain: Probable porphobilinogen deaminase (303 aa).

Residue Cys-233 is modified to S-(dipyrrolylmethanemethyl)cysteine.

Belongs to the HMBS family. Dipyrromethane is required as a cofactor.

It carries out the reaction 4 porphobilinogen + H2O = hydroxymethylbilane + 4 NH4(+). The protein operates within porphyrin-containing compound metabolism; protoporphyrin-IX biosynthesis; coproporphyrinogen-III from 5-aminolevulinate: step 2/4. In terms of biological role, tetrapolymerization of the monopyrrole PBG into the hydroxymethylbilane pre-uroporphyrinogen in several discrete steps. This is Probable porphobilinogen deaminase from Methanocella arvoryzae (strain DSM 22066 / NBRC 105507 / MRE50).